A 326-amino-acid polypeptide reads, in one-letter code: MTKYAKIIGTGSYLPPRRVTNHELAAQLAEKGIETSDEWIVSRSGISARHWAEPDVTSSTLAVKAAEQAIEAAGIDRQDIDLIIVATSTPDFVFPSTACIVQEKLGITNHCPAFDLQAVCSGFVYALATADKFIRSGSHRNVLVIGTEVFSRILDFNDRTTCVLFGDGAGAVVLSASDEPGILSSAMHSDGSHVDILCVPGNVAGGNITGNPFLHMDGQAVFKLAVNVLDKVAREAMEAASVSPDQVDWLIPHQANIRIMQGTAKKLGLPAERMVATVHEHGNTSAASIPLALDVAVRDGRIRPGHTVLMEGVGGGFTWGAVLLRM.

Catalysis depends on residues cysteine 120 and histidine 253. The interval 254–258 (QANIR) is ACP-binding. Residue asparagine 283 is part of the active site.

It belongs to the thiolase-like superfamily. FabH family. As to quaternary structure, homodimer.

Its subcellular location is the cytoplasm. The catalysed reaction is malonyl-[ACP] + acetyl-CoA + H(+) = 3-oxobutanoyl-[ACP] + CO2 + CoA. The protein operates within lipid metabolism; fatty acid biosynthesis. Catalyzes the condensation reaction of fatty acid synthesis by the addition to an acyl acceptor of two carbons from malonyl-ACP. Catalyzes the first condensation reaction which initiates fatty acid synthesis and may therefore play a role in governing the total rate of fatty acid production. Possesses both acetoacetyl-ACP synthase and acetyl transacylase activities. Its substrate specificity determines the biosynthesis of branched-chain and/or straight-chain of fatty acids. This chain is Beta-ketoacyl-[acyl-carrier-protein] synthase III, found in Cupriavidus taiwanensis (strain DSM 17343 / BCRC 17206 / CCUG 44338 / CIP 107171 / LMG 19424 / R1) (Ralstonia taiwanensis (strain LMG 19424)).